Here is a 670-residue protein sequence, read N- to C-terminus: ATP synthase subunit alpha 2 (670 aa).

Position 180-187 (180-187 (GDRATGKT)) interacts with ATP. Residues 525-670 (MPAEDAAGDI…DAEAEARHKR (146 aa)) form a disordered region. Residues 543–588 (ARGDADRDADHGANREVSREVSPEASREVSREVSREVSHEADRDAA) show a composition bias toward basic and acidic residues. Positions 589 to 599 (ADAARVAGRAP) are enriched in low complexity. Over residues 621–639 (ADGDRASASRPPPDARGDA) the composition is skewed to basic and acidic residues. Residues 650–661 (ADANVNADANVD) show a composition bias toward low complexity.

Belongs to the ATPase alpha/beta chains family. F-type ATPases have 2 components, CF(1) - the catalytic core - and CF(0) - the membrane proton channel. CF(1) has five subunits: alpha(3), beta(3), gamma(1), delta(1), epsilon(1). CF(0) has three main subunits: a(1), b(2) and c(9-12). The alpha and beta chains form an alternating ring which encloses part of the gamma chain. CF(1) is attached to CF(0) by a central stalk formed by the gamma and epsilon chains, while a peripheral stalk is formed by the delta and b chains.

The protein localises to the cell inner membrane. The enzyme catalyses ATP + H2O + 4 H(+)(in) = ADP + phosphate + 5 H(+)(out). In terms of biological role, produces ATP from ADP in the presence of a proton gradient across the membrane. The alpha chain is a regulatory subunit. In Burkholderia mallei (strain NCTC 10247), this protein is ATP synthase subunit alpha 2.